The following is a 108-amino-acid chain: DNA-directed RNA polymerase III subunit RPC10 (108 aa).

Positions 5, 8, 25, 28, 69, and 72 each coordinate Zn(2+). The C4-type zinc finger occupies 5–28 (CPGCGNGLIVEEGQRCHRFACNTC). The segment at 65–107 (TAEPCPKCEHPRAYFMQLQTRYADEPMTTFYKCCNAQCGHRWR) adopts a TFIIS-type zinc-finger fold. The Hairpin motif lies at 88-89 (DE). Zn(2+) is bound by residues cysteine 98 and cysteine 102.

Belongs to the archaeal RpoM/eukaryotic RPA12/RPB9/RPC11 RNA polymerase family. Component of the RNA polymerase III complex consisting of 17 subunits: a ten-subunit horseshoe-shaped catalytic core composed of POLR3A/RPC1, POLR3B/RPC2, POLR1C/RPAC1, POLR1D/RPAC2, POLR3K/RPC10, POLR2E/RPABC1, POLR2F/RPABC2, POLR2H/RPABC3, POLR2K/RPABC4 and POLR2L/RPABC5; a mobile stalk composed of two subunits POLR3H/RPC8 and CRCP/RPC9, protruding from the core and functioning primarily in transcription initiation; and additional subunits homologous to general transcription factors of the RNA polymerase II machinery, POLR3C/RPC3-POLR3F/RPC6-POLR3G/RPC7 heterotrimer required for transcription initiation and POLR3D/RPC4-POLR3E/RPC5 heterodimer involved in both transcription initiation and termination.

It localises to the nucleus. Core component of RNA polymerase III (Pol III) which synthesizes small non-coding RNAs using the four ribonucleoside triphosphates as substrates. Can mediate Pol I proofreading of the nascent RNA transcript. Anchors into the Pol III active site to constantly monitor transcription fidelity, cleaves mis-incorporated 5'-ribonucleotides and restarts the transcription process. Once Pol III reaches the poly(dT) termination signal, can induce Pol III clamp opening and transcription termination. Pol III plays an important role in sensing and limiting infection by intracellular bacteria and DNA viruses. Acts as a nuclear and cytosolic DNA sensor involved in innate immune response. Can sense non-self dsDNA that serves as template for transcription into dsRNA. The non-self RNA polymerase III transcripts, such as Epstein-Barr virus-encoded RNAs (EBERs) induce type I interferon and NF-kappa-B through the RIG-I pathway. This is DNA-directed RNA polymerase III subunit RPC10 (POLR3K) from Bos taurus (Bovine).